A 194-amino-acid polypeptide reads, in one-letter code: Threonylcarbamoyl-AMP synthase (194 aa).

A YrdC-like domain is found at 12–194; sequence SPNMKDLLIQ…DVMTGKLIRE (183 aa).

The protein belongs to the SUA5 family. TsaC subfamily.

The protein localises to the cytoplasm. It catalyses the reaction L-threonine + hydrogencarbonate + ATP = L-threonylcarbamoyladenylate + diphosphate + H2O. Required for the formation of a threonylcarbamoyl group on adenosine at position 37 (t(6)A37) in tRNAs that read codons beginning with adenine. Catalyzes the conversion of L-threonine, HCO(3)(-)/CO(2) and ATP to give threonylcarbamoyl-AMP (TC-AMP) as the acyladenylate intermediate, with the release of diphosphate. In Blochmanniella pennsylvanica (strain BPEN), this protein is Threonylcarbamoyl-AMP synthase.